The primary structure comprises 284 residues: MTQPCIISVAITGSLPRKRDNPAVPITVSEQVESTQAAFEAGATLVHLHVRNDDETPSSEPDRFARVLEGIRKHAPGIITQVSTGGRSGAGRERGGMLSLRPDMASLATGSVNFPTRVYDNPPDLVDWLAAEMKAYAIKPEIEAFDLSMIFQAVAMQQAGKIDGALHIQFVMGIKNAMPVDREVLAFYVHTLRRLAPDATWTGAGIGRDQLTMARWSLELGGHCRTGLEDNVRLDKQTLAPSNAALVSQVAALCEEYGRPVATVAQARALLGLPSMEIDGRSPW.

Positions 47, 49, and 229 each coordinate Zn(2+).

The protein belongs to the BKACE family. Zn(2+) serves as cofactor.

It catalyses the reaction 3-oxoadipate + acetyl-CoA = acetoacetate + succinyl-CoA. Catalyzes the condensation of 3-oxoadipate (beta-ketoadipate) and acetyl-CoA, forming acetoacetate and succinyl-CoA. Is likely involved is the degradation of 3-oxoadipate through an alternative pathway, within catechol degradation. The sequence is that of 3-oxoadipate:acetyl-CoA acetyltransferase from Cupriavidus necator (strain ATCC 17699 / DSM 428 / KCTC 22496 / NCIMB 10442 / H16 / Stanier 337) (Ralstonia eutropha).